Consider the following 103-residue polypeptide: MSQFNNVTLVKAANVYFDGKVSSRTVQFNDGSHKTLGLMLPGEYEFGTQAKELMEIMSGELQIMLPESHTWQSIVGPQSFEARESPDNCFYFQFSRHAWCYLI.

This sequence belongs to the nucleoside phosphorylase PpnP family.

The catalysed reaction is a purine D-ribonucleoside + phosphate = a purine nucleobase + alpha-D-ribose 1-phosphate. It catalyses the reaction adenosine + phosphate = alpha-D-ribose 1-phosphate + adenine. It carries out the reaction cytidine + phosphate = cytosine + alpha-D-ribose 1-phosphate. The enzyme catalyses guanosine + phosphate = alpha-D-ribose 1-phosphate + guanine. The catalysed reaction is inosine + phosphate = alpha-D-ribose 1-phosphate + hypoxanthine. It catalyses the reaction thymidine + phosphate = 2-deoxy-alpha-D-ribose 1-phosphate + thymine. It carries out the reaction uridine + phosphate = alpha-D-ribose 1-phosphate + uracil. The enzyme catalyses xanthosine + phosphate = alpha-D-ribose 1-phosphate + xanthine. Functionally, catalyzes the phosphorolysis of diverse nucleosides, yielding D-ribose 1-phosphate and the respective free bases. Can use uridine, adenosine, guanosine, cytidine, thymidine, inosine and xanthosine as substrates. Also catalyzes the reverse reactions. This chain is Pyrimidine/purine nucleoside phosphorylase, found in Shewanella denitrificans (strain OS217 / ATCC BAA-1090 / DSM 15013).